The sequence spans 430 residues: Histidinol dehydrogenase (430 aa).

Substrate-binding residues include Ser237, Gln259, and His262. Residues Gln259 and His262 each coordinate Zn(2+). Active-site proton acceptor residues include Glu327 and His328. The substrate site is built by His328, Asp361, Glu415, and His420. Asp361 lines the Zn(2+) pocket. His420 lines the Zn(2+) pocket.

This sequence belongs to the histidinol dehydrogenase family. Zn(2+) is required as a cofactor.

It carries out the reaction L-histidinol + 2 NAD(+) + H2O = L-histidine + 2 NADH + 3 H(+). It participates in amino-acid biosynthesis; L-histidine biosynthesis; L-histidine from 5-phospho-alpha-D-ribose 1-diphosphate: step 9/9. Catalyzes the sequential NAD-dependent oxidations of L-histidinol to L-histidinaldehyde and then to L-histidine. The polypeptide is Histidinol dehydrogenase (Sulfurimonas denitrificans (strain ATCC 33889 / DSM 1251) (Thiomicrospira denitrificans (strain ATCC 33889 / DSM 1251))).